Consider the following 548-residue polypeptide: Leucine-rich repeat LGI family member 3 (548 aa).

Residues 1–30 (MAGLRARRGPGRRLLVLSTLGFCLMLQVSA) form the signal peptide. The LRRNT domain maps to 31-64 (KRPPKTPPCPPSCSCTRDTAFCVDSKSVPKNLPS). LRR repeat units lie at residues 89-110 (LLQF…AFIG), 113-134 (HLQY…TFRG), and 137-158 (SLTH…IFRP). The 51-residue stretch at 170 to 220 (NALNCDCKVKWLVEWLAHTNTTVAPIYCASPPRFQEHKVQDLPLREFDCIT) folds into the LRRCT domain. Asparagine 189 carries N-linked (GlcNAc...) asparagine glycosylation. EAR repeat units lie at residues 222-264 (DFVL…KWDY) and 268-310 (QLRD…HWDP). A glycan (N-linked (GlcNAc...) asparagine) is linked at asparagine 311. EAR repeat units lie at residues 314 to 361 (RFTK…RWHQ), 363 to 406 (GFYS…QWSR), 410 to 453 (QFVA…RWEG), 455 to 497 (RFSE…QWDE), and 501 to 543 (KFVR…RHVV).

Interacts with STX1A. Brain.

It is found in the secreted. The protein resides in the cytoplasmic vesicle. The protein localises to the secretory vesicle. It localises to the synaptic vesicle. Its subcellular location is the synapse. It is found in the synaptosome. The protein resides in the cell projection. The protein localises to the axon. May participate in the regulation of neuronal exocytosis. This chain is Leucine-rich repeat LGI family member 3 (Lgi3), found in Mus musculus (Mouse).